The chain runs to 786 residues: Endonuclease MutS2 (786 aa).

332–339 contributes to the ATP binding site; the sequence is GPNTGGKT. In terms of domain architecture, Smr spans 710-785; the sequence is VDLRGLDAEE…GDGVTMVELK (76 aa).

This sequence belongs to the DNA mismatch repair MutS family. MutS2 subfamily. As to quaternary structure, homodimer. Binds to stalled ribosomes, contacting rRNA.

Its function is as follows. Endonuclease that is involved in the suppression of homologous recombination and thus may have a key role in the control of bacterial genetic diversity. Functionally, acts as a ribosome collision sensor, splitting the ribosome into its 2 subunits. Detects stalled/collided 70S ribosomes which it binds and splits by an ATP-hydrolysis driven conformational change. Acts upstream of the ribosome quality control system (RQC), a ribosome-associated complex that mediates the extraction of incompletely synthesized nascent chains from stalled ribosomes and their subsequent degradation. Probably generates substrates for RQC. The chain is Endonuclease MutS2 from Clostridium beijerinckii (strain ATCC 51743 / NCIMB 8052) (Clostridium acetobutylicum).